The primary structure comprises 472 residues: MTTCSRQFTSSSSMKGSCGIGGGIGGGSSRISSVLAGGSCRAPSTYGGGLSVSSSRFSSGGACGLGGGYGGGFSSSSSSFGSGFGGGYGGGLGAGLGGGFGGGFAGGDGLLVGSEKVTMQNLNDRLASYLDKVRALEEANADLEVKIRDWYQRQRPAEIKDYSPYFKTIEDLRNKILTATVDNANVLLQIDNARLAADDFRTKYETELNLRMSVEADINGLRRVLDELTLARADLEMQIESLKEELAYLKKNHEEEMNALRGQVGGDVNVEMDAAPGVDLSRILNEMRDQYEKMAEKNRKDAEEWFFTKTEELNREVATNSELVQSGKSEISELRRTMQNLEIELQSQLSMKASLENSLEETKGRYCMQLAQIQEMIGSVEEQLAQLRCEMEQQNQEYKILLDVKTRLEQEIATYRRLLEGEDAHLSSSQFSSGSQSSRDVTSSSRQIRTKVMDVHDGKVVSTHEQVLRTKN.

A head region spans residues 1 to 114 (MTTCSRQFTS…AGGDGLLVGS (114 aa)). The segment at 115–150 (EKVTMQNLNDRLASYLDKVRALEEANADLEVKIRDW) is coil 1A. An IF rod domain is found at 115 to 426 (EKVTMQNLND…RLLEGEDAHL (312 aa)). The segment at 151–168 (YQRQRPAEIKDYSPYFKT) is linker 1. Positions 169–260 (IEDLRNKILT…KNHEEEMNAL (92 aa)) are coil 1B. The segment at 261–283 (RGQVGGDVNVEMDAAPGVDLSRI) is linker 12. Positions 284 to 422 (LNEMRDQYEK…ATYRRLLEGE (139 aa)) are coil 2. A tail region spans residues 423 to 472 (DAHLSSSQFSSGSQSSRDVTSSSRQIRTKVMDVHDGKVVSTHEQVLRTKN). An interaction with Type I keratins and keratin filaments region spans residues 425-472 (HLSSSQFSSGSQSSRDVTSSSRQIRTKVMDVHDGKVVSTHEQVLRTKN). The interval 426–472 (LSSSQFSSGSQSSRDVTSSSRQIRTKVMDVHDGKVVSTHEQVLRTKN) is disordered. Residues 427 to 445 (SSSQFSSGSQSSRDVTSSS) show a composition bias toward low complexity. Phosphoserine is present on serine 435.

It belongs to the intermediate filament family. Heterotetramer of two type I and two type II keratins. Forms a disulfide-linked heterodimer (via 2B domains) with KRT5 (via 2B domains). Forms a heterodimer with KRT1; the interaction is more abundant in the absence of KRT5. Interacts with PLEC isoform 1C, when in a heterodimer with KRT5. Interacts with TRADD and with keratin filaments. Associates with other type I keratins. Interacts with EPPK1. Interacts with KLHL24. Interacts with PKP1 (via N-terminus) and PKP2. Post-translationally, a disulfide bond is formed between rather than within filaments and promotes the formation of a keratin filament cage around the nucleus. In terms of processing, ubiquitinated by the BCR(KLHL24) E3 ubiquitin ligase complex. Expressed in the corneal epithelium (at protein level). Detected in the basal layer, lowered within the more apically located layers specifically in the stratum spinosum, stratum granulosum but is not detected in stratum corneum. Strongly expressed in the outer root sheath of anagen follicles but not in the germinative matrix, inner root sheath or hair. Found in keratinocytes surrounding the club hair during telogen.

Its subcellular location is the cytoplasm. The protein resides in the nucleus. The nonhelical tail domain is involved in promoting KRT5-KRT14 filaments to self-organize into large bundles and enhances the mechanical properties involved in resilience of keratin intermediate filaments in vitro. In Homo sapiens (Human), this protein is Keratin, type I cytoskeletal 14 (KRT14).